The following is a 652-amino-acid chain: Coiled-coil domain-containing protein 81 (652 aa).

Position 206 is a phosphoserine (Ser206). Basic and acidic residues predominate over residues 238 to 256; the sequence is KCKLKDQSDKEEGTRDISS. The segment at 238–258 is disordered; that stretch reads KCKLKDQSDKEEGTRDISSPK. Ser275, Ser296, and Ser417 each carry phosphoserine. Residues 436-493 adopt a coiled-coil conformation; it reads MDNRQENEIKQRQYRELMDRLEQVQLTEELAAQRAKFLKDKMEETQCYKRALDAQIKN.

The protein resides in the cytoplasm. The protein localises to the cytoskeleton. Its subcellular location is the microtubule organizing center. It is found in the centrosome. This chain is Coiled-coil domain-containing protein 81 (CCDC81), found in Homo sapiens (Human).